A 500-amino-acid polypeptide reads, in one-letter code: Nuclear distribution protein PAC1 (500 aa).

WD repeat units lie at residues 125–164 (HNGH…EPQQ), 169–219 (AHTR…NLKA), 225–265 (GHEN…IVLS), 268–310 (GHSN…LMIG), 338–378 (QNEL…IRSD), 397–436 (EHKS…ESNL), and 459–500 (IKDQ…EYIL).

This sequence belongs to the WD repeat LIS1/nudF family. Self-associates. Interacts with NDL1 and dynein.

The protein resides in the cytoplasm. It is found in the cytoskeleton. The protein localises to the spindle pole. Functionally, positively regulates the activity of the minus-end directed microtubule motor protein dynein. Plays a central role in positioning the mitotic spindle at the bud neck during cell division. Targets cytoplasmic dynein to microtubule plus ends, thereby promoting dynein-mediated microtubule sliding along the bud cortex and consequently the movement of the mitotic spindle to the bud neck. In Komagataella phaffii (strain GS115 / ATCC 20864) (Yeast), this protein is Nuclear distribution protein PAC1.